Reading from the N-terminus, the 263-residue chain is Endonuclease 8 (263 aa).

Proline 2 functions as the Schiff-base intermediate with DNA in the catalytic mechanism. Catalysis depends on glutamate 3, which acts as the Proton donor. Lysine 53 acts as the Proton donor; for beta-elimination activity in catalysis. The DNA site is built by glutamine 70, arginine 125, and asparagine 169. The segment at 229-263 (KVFHRDGEPCERCGGIIEKTTLSSRPFYWCPGCQH) adopts an FPG-type zinc-finger fold. Arginine 253 acts as the Proton donor; for delta-elimination activity in catalysis.

This sequence belongs to the FPG family. Zn(2+) is required as a cofactor.

It carries out the reaction 2'-deoxyribonucleotide-(2'-deoxyribose 5'-phosphate)-2'-deoxyribonucleotide-DNA = a 3'-end 2'-deoxyribonucleotide-(2,3-dehydro-2,3-deoxyribose 5'-phosphate)-DNA + a 5'-end 5'-phospho-2'-deoxyribonucleoside-DNA + H(+). Functionally, involved in base excision repair of DNA damaged by oxidation or by mutagenic agents. Acts as a DNA glycosylase that recognizes and removes damaged bases. Has a preference for oxidized pyrimidines, such as thymine glycol, 5,6-dihydrouracil and 5,6-dihydrothymine. Has AP (apurinic/apyrimidinic) lyase activity and introduces nicks in the DNA strand. Cleaves the DNA backbone by beta-delta elimination to generate a single-strand break at the site of the removed base with both 3'- and 5'-phosphates. This is Endonuclease 8 from Escherichia coli O127:H6 (strain E2348/69 / EPEC).